Reading from the N-terminus, the 399-residue chain is 26S proteasome regulatory subunit S10B homolog B (399 aa).

ATP is bound at residue 180–187 (GPPGTGKT). Residue K203 forms a Glycyl lysine isopeptide (Lys-Gly) (interchain with G-Cter in ubiquitin) linkage.

Belongs to the AAA ATPase family. As to quaternary structure, component of the 19S regulatory particle (RP/PA700) base subcomplex of the 26S proteasome. The 26S proteasome is composed of a core protease (CP), known as the 20S proteasome, capped at one or both ends by the 19S regulatory particle (RP/PA700). The RP/PA700 complex is composed of at least 17 different subunits in two subcomplexes, the base and the lid, which form the portions proximal and distal to the 20S proteolytic core, respectively.

Its subcellular location is the cytoplasm. It is found in the nucleus. Functionally, the 26S proteasome is involved in the ATP-dependent degradation of ubiquitinated proteins. The regulatory (or ATPase) complex confers ATP dependency and substrate specificity to the 26S complex. This is 26S proteasome regulatory subunit S10B homolog B (RPT4B) from Arabidopsis thaliana (Mouse-ear cress).